A 186-amino-acid polypeptide reads, in one-letter code: Threonylcarbamoyl-AMP synthase (186 aa).

Positions 5 to 186 constitute a YrdC-like domain; that stretch reads TQSINDAVKC…DAITGEILRL (182 aa).

The protein belongs to the SUA5 family. TsaC subfamily.

It localises to the cytoplasm. The enzyme catalyses L-threonine + hydrogencarbonate + ATP = L-threonylcarbamoyladenylate + diphosphate + H2O. Required for the formation of a threonylcarbamoyl group on adenosine at position 37 (t(6)A37) in tRNAs that read codons beginning with adenine. Catalyzes the conversion of L-threonine, HCO(3)(-)/CO(2) and ATP to give threonylcarbamoyl-AMP (TC-AMP) as the acyladenylate intermediate, with the release of diphosphate. This Coxiella burnetii (strain RSA 331 / Henzerling II) protein is Threonylcarbamoyl-AMP synthase.